Here is a 452-residue protein sequence, read N- to C-terminus: Tripartite motif-containing protein 51G (452 aa).

Residues 15–56 (CPICMNYFIDPVTIDCGHSFCRPCFYLNWQDMAVLAQCSKCK) form an RING-type zinc finger. Residues 88 to 129 (SEEQICGTHRETKEMFCEVDKSLLCLLCSNSQEHRNHRHCPT) form a B box-type zinc finger. Positions 93, 96, 115, and 121 each coordinate Zn(2+). Residues 269 to 452 (EFSAGPIIGL…LWPIICCSHF (184 aa)) enclose the B30.2/SPRY domain.

Belongs to the TRIM/RBCC family.

This is Tripartite motif-containing protein 51G from Homo sapiens (Human).